A 94-amino-acid chain; its full sequence is Neutrophil defensin 1 (94 aa).

An N-terminal signal peptide occupies residues 1–19 (MRTLAILAAILLVALQAQA). A propeptide spanning residues 20-38 (EPLQARADEVAAAPEQIAA) is cleaved from the precursor. Intrachain disulfides connect C66–C94, C68–C83, and C73–C93. At R78 the chain carries ADP-ribosylarginine; by ART1. Y85 carries the post-translational modification Phosphotyrosine. R88 is subject to ADP-ribosylarginine; by ART1.

Belongs to the alpha-defensin family. Tetramer. Dimer. Interacts with RETN. As to quaternary structure, (Microbial infection) Interacts with HIV-1 surface protein gp120. In terms of assembly, (Microbial infection) Interacts with herpes virus 1 (HHV1) envelope glycoprotein B; this interaction inhibits viral infection. ADP-ribosylation drastically reduces cytotoxic and antibacterial activities, and enhances IL8 production. In terms of processing, phosphorylation at Tyr-85 has been found in some cancer cell lines, and interferes with ADP-ribosylation.

It is found in the secreted. In terms of biological role, effector molecule of the innate immune system that acts via antibiotic-like properties against a broad array of infectious agents including bacteria, fungi, and viruses or by promoting the activation and maturation of some APCs. Interacts with the essential precursor of cell wall synthesis lipid II to inhibit bacterial cell wall synthesis. Inhibits adenovirus infection via inhibition of viral disassembly at the vertex region, thereby restricting the release of internal capsid protein pVI, which is required for endosomal membrane penetration during cell entry. In addition, interaction with adenovirus capsid leads to the redirection of viral particles to TLR4 thereby promoting a NLRP3-mediated inflammasome response and interleukin 1-beta (IL-1beta) release. Induces the production of proinflammatory cytokines including type I interferon (IFN) in plasmacytoid dendritic cells (pDCs) by triggering the degradation of NFKBIA and nuclear translocation of IRF1, both of which are required for activation of pDCs. The sequence is that of Neutrophil defensin 1 (DEFA1) from Homo sapiens (Human).